The sequence spans 475 residues: Glutamate--tRNA ligase 1 (475 aa).

The 'HIGH' region signature appears at 11 to 21; that stretch reads PSPTGYLHIGG. The 'KMSKS' region motif lies at 240 to 244; that stretch reads KLSKR. Lys-243 provides a ligand contact to ATP.

This sequence belongs to the class-I aminoacyl-tRNA synthetase family. Glutamate--tRNA ligase type 1 subfamily. In terms of assembly, monomer.

It is found in the cytoplasm. It carries out the reaction tRNA(Glu) + L-glutamate + ATP = L-glutamyl-tRNA(Glu) + AMP + diphosphate. Its function is as follows. Catalyzes the attachment of glutamate to tRNA(Glu) in a two-step reaction: glutamate is first activated by ATP to form Glu-AMP and then transferred to the acceptor end of tRNA(Glu). The protein is Glutamate--tRNA ligase 1 of Methylobacterium radiotolerans (strain ATCC 27329 / DSM 1819 / JCM 2831 / NBRC 15690 / NCIMB 10815 / 0-1).